We begin with the raw amino-acid sequence, 318 residues long: Deoxyribose-phosphate aldolase (318 aa).

Asp155 functions as the Proton donor/acceptor in the catalytic mechanism. Lys218 (schiff-base intermediate with acetaldehyde) is an active-site residue. Lys254 (proton donor/acceptor) is an active-site residue.

The protein belongs to the DeoC/FbaB aldolase family. DeoC type 2 subfamily. Interacts with YBX1. In terms of tissue distribution, mainly expressed in liver, lung and colon.

It localises to the cytoplasm. Its subcellular location is the cytoplasmic granule. It is found in the nucleus. It carries out the reaction 2-deoxy-D-ribose 5-phosphate = D-glyceraldehyde 3-phosphate + acetaldehyde. It functions in the pathway carbohydrate degradation; 2-deoxy-D-ribose 1-phosphate degradation; D-glyceraldehyde 3-phosphate and acetaldehyde from 2-deoxy-alpha-D-ribose 1-phosphate: step 2/2. Its function is as follows. Catalyzes a reversible aldol reaction between acetaldehyde and D-glyceraldehyde 3-phosphate to generate 2-deoxy-D-ribose 5-phosphate. Participates in stress granule (SG) assembly. May allow ATP production from extracellular deoxyinosine in conditions of energy deprivation. In Homo sapiens (Human), this protein is Deoxyribose-phosphate aldolase (DERA).